A 224-amino-acid polypeptide reads, in one-letter code: Urease accessory protein UreF (224 aa).

The protein belongs to the UreF family. In terms of assembly, ureD, UreF and UreG form a complex that acts as a GTP-hydrolysis-dependent molecular chaperone, activating the urease apoprotein by helping to assemble the nickel containing metallocenter of UreC. The UreE protein probably delivers the nickel.

It localises to the cytoplasm. Its function is as follows. Required for maturation of urease via the functional incorporation of the urease nickel metallocenter. This chain is Urease accessory protein UreF, found in Enterobacter sp. (strain 638).